We begin with the raw amino-acid sequence, 1004 residues long: Bifunctional glutamine synthetase adenylyltransferase/adenylyl-removing enzyme (1004 aa).

The interval methionine 1 to leucine 496 is adenylyl removase. Residues arginine 502–serine 1004 are adenylyl transferase.

This sequence belongs to the GlnE family. Requires Mg(2+) as cofactor.

It catalyses the reaction [glutamine synthetase]-O(4)-(5'-adenylyl)-L-tyrosine + phosphate = [glutamine synthetase]-L-tyrosine + ADP. The catalysed reaction is [glutamine synthetase]-L-tyrosine + ATP = [glutamine synthetase]-O(4)-(5'-adenylyl)-L-tyrosine + diphosphate. Involved in the regulation of glutamine synthetase GlnA, a key enzyme in the process to assimilate ammonia. When cellular nitrogen levels are high, the C-terminal adenylyl transferase (AT) inactivates GlnA by covalent transfer of an adenylyl group from ATP to specific tyrosine residue of GlnA, thus reducing its activity. Conversely, when nitrogen levels are low, the N-terminal adenylyl removase (AR) activates GlnA by removing the adenylyl group by phosphorolysis, increasing its activity. The regulatory region of GlnE binds the signal transduction protein PII (GlnB) which indicates the nitrogen status of the cell. This Nocardia farcinica (strain IFM 10152) protein is Bifunctional glutamine synthetase adenylyltransferase/adenylyl-removing enzyme.